The following is a 150-amino-acid chain: Developmental pluripotency-associated protein 3 (150 aa).

Residues 1-22 (MEEPSEKVDPMKDPETPQKKDE) are compositionally biased toward basic and acidic residues. Residues 1-32 (MEEPSEKVDPMKDPETPQKKDEEDALDDTDVL) form a disordered region. The required for H3K9me2-binding stretch occupies residues 1 to 75 (MEEPSEKVDP…VPVENKSEKI (75 aa)). Positions 76 to 150 (RREVQSAFPK…PSENAKIGKN (75 aa)) are required to exclude TET3 from the maternal pronucleus.

Expressed in the immature oocytes and in newborn ovaries. Subsequently detected in maturing oocytes and in preimplantation embryos. Expressed in pluripotent embryonic but not in differentiated somatic cells. Expressed in blastocysts, epiblasts, primordial germ cells, embryonic gonads and primitive spermatogonia. No expression is detected in adult testes.

It localises to the nucleus. The protein localises to the cytoplasm. Functionally, primordial germ cell (PGCs)-specific protein involved in epigenetic chromatin reprogramming in the zygote following fertilization. In zygotes, DNA demethylation occurs selectively in the paternal pronucleus before the first cell division, while the adjacent maternal pronucleus and certain paternally-imprinted loci are protected from this process. Participates in protection of DNA methylation in the maternal pronucleus by preventing conversion of 5mC to 5hmC: specifically recognizes and binds histone H3 dimethylated at 'Lys-9' (H3K9me2) on maternal genome, and protects maternal genome from TET3-mediated conversion to 5hmC and subsequent DNA demethylation. Does not bind paternal chromatin, which is mainly packed into protamine and does not contain much H3K9me2 mark. Also protects imprinted loci that are marked with H3K9me2 in mature sperm from DNA demethylation in early embryogenesis. May be important for the totipotent/pluripotent states continuing through preimplantation development. Also involved in chromatin condensation in oocytogenesis. The protein is Developmental pluripotency-associated protein 3 (Dppa3) of Mus musculus (Mouse).